Here is a 466-residue protein sequence, read N- to C-terminus: Glutamate--tRNA ligase 2 (466 aa).

The 'HIGH' region signature appears at 9 to 19; it reads PSPTGYLHVGG. The 'KMSKS' region signature appears at 234 to 238; the sequence is PLSKR. Lys237 contacts ATP.

This sequence belongs to the class-I aminoacyl-tRNA synthetase family. Glutamate--tRNA ligase type 1 subfamily. In terms of assembly, monomer.

It is found in the cytoplasm. The catalysed reaction is tRNA(Glu) + L-glutamate + ATP = L-glutamyl-tRNA(Glu) + AMP + diphosphate. In terms of biological role, catalyzes the attachment of glutamate to tRNA(Glu) in a two-step reaction: glutamate is first activated by ATP to form Glu-AMP and then transferred to the acceptor end of tRNA(Glu). The polypeptide is Glutamate--tRNA ligase 2 (Pseudothermotoga lettingae (strain ATCC BAA-301 / DSM 14385 / NBRC 107922 / TMO) (Thermotoga lettingae)).